The sequence spans 511 residues: D-alanine--D-alanyl carrier protein ligase (511 aa).

152 to 153 (TS) contacts ATP. Asp199 provides a ligand contact to D-alanine. 294-299 (NAYGPT) provides a ligand contact to ATP. Val303 contacts D-alanine. ATP-binding positions include Asp385, 397 to 400 (YGGR), and Lys499. Lys499 is a binding site for D-alanine.

It belongs to the ATP-dependent AMP-binding enzyme family. DltA subfamily.

The protein resides in the cytoplasm. The enzyme catalyses holo-[D-alanyl-carrier protein] + D-alanine + ATP = D-alanyl-[D-alanyl-carrier protein] + AMP + diphosphate. The protein operates within cell wall biogenesis; lipoteichoic acid biosynthesis. In terms of biological role, catalyzes the first step in the D-alanylation of lipoteichoic acid (LTA), the activation of D-alanine and its transfer onto the D-alanyl carrier protein (Dcp) DltC. In an ATP-dependent two-step reaction, forms a high energy D-alanyl-AMP intermediate, followed by transfer of the D-alanyl residue as a thiol ester to the phosphopantheinyl prosthetic group of the Dcp. D-alanylation of LTA plays an important role in modulating the properties of the cell wall in Gram-positive bacteria, influencing the net charge of the cell wall. This is D-alanine--D-alanyl carrier protein ligase from Streptococcus agalactiae serotype V (strain ATCC BAA-611 / 2603 V/R).